A 235-amino-acid chain; its full sequence is Small ribosomal subunit protein uS3 (235 aa).

Positions 39-107 (IREILHKELK…DVVINIVEIR (69 aa)) constitute a KH type-2 domain. The segment at 215 to 235 (QDKRMAESDGGGSSRPRRDAA) is disordered.

The protein belongs to the universal ribosomal protein uS3 family. As to quaternary structure, part of the 30S ribosomal subunit. Forms a tight complex with proteins S10 and S14.

Its function is as follows. Binds the lower part of the 30S subunit head. Binds mRNA in the 70S ribosome, positioning it for translation. This Rhodopseudomonas palustris (strain TIE-1) protein is Small ribosomal subunit protein uS3.